The primary structure comprises 338 residues: Secretory carrier-associated membrane protein 1 (338 aa).

Residues 1 to 64 (MSDFDSNPFA…NVPNTQPAIM (64 aa)) form a disordered region. Serine 2 carries the N-acetylserine modification. Residue serine 2 is modified to Phosphoserine. Topologically, residues 2–155 (SDFDSNPFAD…QKTVKLMYYL (154 aa)) are cytoplasmic. At threonine 45 the chain carries Phosphothreonine. The helical transmembrane segment at 156-176 (WMFHAVTLFLNIFGCLAWFCV) threads the bilayer. Over 177 to 181 (DSSRA) the chain is Lumenal. A helical membrane pass occupies residues 182 to 202 (VDFGLSILWFLLFTPCSFVCW). At 203–218 (YRPLYGAFRSDSSFRF) the chain is on the cytoplasmic side. The chain crosses the membrane as a helical span at residues 219-239 (FVFFFVYICQFAVHVLQAAGF). The Lumenal segment spans residues 240–261 (HNWGNCGWISSLTGLNKNIPVG). The helical transmembrane segment at 262–282 (IMMIIIAALFTASAVISLVMF) threads the bilayer. The Cytoplasmic portion of the chain corresponds to 283–338 (KKVHGLYRTTGASFEKAQQEFATGVMSNKTVQTAAANAASTAATSAAQNAFKGNQM).

The protein belongs to the SCAMP family. In terms of assembly, interacts with SYNRG, ITSN1 and SLC9A7.

The protein localises to the golgi apparatus. It localises to the trans-Golgi network membrane. It is found in the recycling endosome membrane. In terms of biological role, functions in post-Golgi recycling pathways. Acts as a recycling carrier to the cell surface. The polypeptide is Secretory carrier-associated membrane protein 1 (Scamp1) (Mus musculus (Mouse)).